A 299-amino-acid chain; its full sequence is Pyrroline-5-carboxylate reductase 2 (299 aa).

This sequence belongs to the pyrroline-5-carboxylate reductase family. As to quaternary structure, homodecamer; composed of 5 homodimers.

The catalysed reaction is L-proline + NADP(+) = (S)-1-pyrroline-5-carboxylate + NADPH + 2 H(+). The enzyme catalyses L-proline + NAD(+) = (S)-1-pyrroline-5-carboxylate + NADH + 2 H(+). It functions in the pathway amino-acid biosynthesis; L-proline biosynthesis; L-proline from L-glutamate 5-semialdehyde: step 1/1. This Dictyostelium discoideum (Social amoeba) protein is Pyrroline-5-carboxylate reductase 2 (pycr2).